The following is a 348-amino-acid chain: Dihydroorotase (348 aa).

Zn(2+) is bound by residues His14 and His16. Substrate-binding positions include His16 to Arg18 and Asn42. Residues Lys100, His137, and His175 each contribute to the Zn(2+) site. Lys100 carries the N6-carboxylysine modification. Substrate is bound at residue His137. Leu220 lines the substrate pocket. Residue Asp248 coordinates Zn(2+). The active site involves Asp248. Residues His252 and Ala264 each contribute to the substrate site.

The protein belongs to the metallo-dependent hydrolases superfamily. DHOase family. Class II DHOase subfamily. In terms of assembly, homodimer. Zn(2+) is required as a cofactor.

It carries out the reaction (S)-dihydroorotate + H2O = N-carbamoyl-L-aspartate + H(+). It participates in pyrimidine metabolism; UMP biosynthesis via de novo pathway; (S)-dihydroorotate from bicarbonate: step 3/3. Functionally, catalyzes the reversible cyclization of carbamoyl aspartate to dihydroorotate. This chain is Dihydroorotase, found in Pseudomonas entomophila (strain L48).